A 242-amino-acid chain; its full sequence is Venom nerve growth factor (242 aa).

Positions 1-18 are cleaved as a signal peptide; the sequence is MSMMCYTLIIAFLIGIWA. Residues 19-125 constitute a propeptide that is removed on maturation; that stretch reads APKSEDNVPL…TLNRNIRAKR (107 aa). The segment covering 47–66 has biased composition (basic and acidic residues); sequence GLKTSRNTDQRHPAPKKAED. The interval 47 to 70 is disordered; sequence GLKTSRNTDQRHPAPKKAEDQELG. 3 cysteine pairs are disulfide-bonded: Cys-139-Cys-203, Cys-181-Cys-231, and Cys-191-Cys-233. N-linked (GlcNAc...) asparagine glycosylation occurs at Asn-166.

This sequence belongs to the NGF-beta family. As to quaternary structure, homodimer; non-covalently linked. As to expression, expressed by the venom gland.

It is found in the secreted. Functionally, nerve growth factor is important for the development and maintenance of the sympathetic and sensory nervous systems. It stimulates division and differentiation of sympathetic and embryonic sensory neurons as well as basal forebrain cholinergic neurons in the brain. Its relevance in the snake venom is not clear. However, it has been shown to inhibit metalloproteinase-dependent proteolysis of platelet glycoprotein Ib alpha, suggesting a metalloproteinase inhibition to prevent metalloprotease autodigestion and/or protection against prey proteases. Binds a lipid between the two protein chains in the homodimer. The lipid-bound form promotes histamine relase from mouse mast cells, contrary to the lipid-free form. The sequence is that of Venom nerve growth factor from Drysdalia coronoides (White-lipped snake).